A 396-amino-acid chain; its full sequence is Cystathionine beta-lyase (396 aa).

Lysine 214 is subject to N6-(pyridoxal phosphate)lysine.

This sequence belongs to the trans-sulfuration enzymes family. Homodimer. Pyridoxal 5'-phosphate serves as cofactor.

It is found in the cytoplasm. It carries out the reaction L,L-cystathionine + H2O = L-homocysteine + pyruvate + NH4(+). The catalysed reaction is an S-substituted L-cysteine + H2O = a thiol + pyruvate + NH4(+). It participates in amino-acid biosynthesis; L-methionine biosynthesis via de novo pathway; L-homocysteine from L-cystathionine: step 1/1. In terms of biological role, catalyzes the cleavage of cystathionine to homocysteine, pyruvate and ammonia during methionine biosynthesis. Also has cytotoxic activity toward osteogenic, osteosarcoma and tracheal cells, in vitro. The chemical basis for cell toxicity might be the formation and subsequent transfer of sulfane-sulfur to proteins, derived via beta-cystathionase cleavage of L-cystine. This is Cystathionine beta-lyase (metC) from Bordetella avium.